A 307-amino-acid polypeptide reads, in one-letter code: GTPase Era (307 aa).

Residues 7 to 181 enclose the Era-type G domain; that stretch reads RCGWVALMGP…VELIRKKLPK (175 aa). A G1 region spans residues 15-22; the sequence is GPPNAGKS. 15–22 is a binding site for GTP; sequence GPPNAGKS. Residues 41–45 form a G2 region; the sequence is QTTRN. The segment at 62 to 65 is G3; sequence DTPG. Residues 62–66 and 130–133 each bind GTP; these read DTPGL and NKVD. Residues 130 to 133 are G4; sequence NKVD. Positions 160–162 are G5; it reads ISA. Residues 212-290 enclose the KH type-2 domain; sequence LRQEVPYSVA…HLELWVKVRE (79 aa).

This sequence belongs to the TRAFAC class TrmE-Era-EngA-EngB-Septin-like GTPase superfamily. Era GTPase family. Monomer.

The protein localises to the cytoplasm. Its subcellular location is the cell inner membrane. Its function is as follows. An essential GTPase that binds both GDP and GTP, with rapid nucleotide exchange. Plays a role in 16S rRNA processing and 30S ribosomal subunit biogenesis and possibly also in cell cycle regulation and energy metabolism. This Desulfovibrio desulfuricans (strain ATCC 27774 / DSM 6949 / MB) protein is GTPase Era.